We begin with the raw amino-acid sequence, 551 residues long: Delta-selinene synthase TPS7FN (551 aa).

(2E,6E)-farnesyl diphosphate contacts are provided by R266, D303, D307, R444, and D447. Residues D303 and D307 each contribute to the Mg(2+) site. Positions 303–307 (DDIYD) match the DDXXD motif motif. Residues D447, S451, and E455 each contribute to the Mg(2+) site.

The protein belongs to the terpene synthase family. Tpsb subfamily. Mg(2+) is required as a cofactor. Requires Mn(2+) as cofactor.

It catalyses the reaction (2E,6E)-farnesyl diphosphate = delta-selinene + diphosphate. The enzyme catalyses (2E)-geranyl diphosphate = beta-myrcene + diphosphate. The catalysed reaction is (2E)-geranyl diphosphate = (4S)-limonene + diphosphate. It carries out the reaction (2E,6E)-farnesyl diphosphate + H2O = selina-6-en-4-ol + diphosphate. The protein operates within secondary metabolite biosynthesis; terpenoid biosynthesis. Involved in sesquiterpene olefins biosynthesis, constituants of cannabinoids and terpenoids-rich resins. Catalyzes mainly the conversion of (2E)-farnesyl diphosphate to delta-selinene, and also produces minor products such as selina-6-en-4-ol. Can also use (2E)-geranyl diphosphate as substrate with low efficiency, producing minor amounts of myrcene and limonene. The chain is Delta-selinene synthase TPS7FN from Cannabis sativa (Hemp).